The primary structure comprises 363 residues: NAD(P)H-quinone oxidoreductase subunit 1, chloroplastic (363 aa).

The next 7 helical transmembrane spans lie at 26 to 46, 98 to 118, 127 to 147, 246 to 266, 268 to 288, 300 to 320, and 336 to 356; these read IIWI…GVLV, FSIG…VIPF, LTIG…GLLM, TEYS…NLLV, SLFV…YIFV, VFGP…FLFI, and LLNL…LLTT.

The protein belongs to the complex I subunit 1 family. NDH is composed of at least 16 different subunits, 5 of which are encoded in the nucleus.

It localises to the plastid. The protein localises to the chloroplast thylakoid membrane. The enzyme catalyses a plastoquinone + NADH + (n+1) H(+)(in) = a plastoquinol + NAD(+) + n H(+)(out). The catalysed reaction is a plastoquinone + NADPH + (n+1) H(+)(in) = a plastoquinol + NADP(+) + n H(+)(out). In terms of biological role, NDH shuttles electrons from NAD(P)H:plastoquinone, via FMN and iron-sulfur (Fe-S) centers, to quinones in the photosynthetic chain and possibly in a chloroplast respiratory chain. The immediate electron acceptor for the enzyme in this species is believed to be plastoquinone. Couples the redox reaction to proton translocation, and thus conserves the redox energy in a proton gradient. This is NAD(P)H-quinone oxidoreductase subunit 1, chloroplastic from Coffea arabica (Arabian coffee).